We begin with the raw amino-acid sequence, 577 residues long: Gamma-tubulin complex component gfh1 (577 aa).

The protein belongs to the TUBGCP family.

It localises to the cytoplasm. Its subcellular location is the cytoskeleton. The protein localises to the microtubule organizing center. The protein resides in the spindle pole body. In terms of biological role, required for proper anchoring of astral microtubules at the spindle pole bodies (SPBs), during anaphase, ensuring correct cell polarity. The chain is Gamma-tubulin complex component gfh1 (gfh1) from Schizosaccharomyces pombe (strain 972 / ATCC 24843) (Fission yeast).